An 825-amino-acid chain; its full sequence is Zinc finger protein 28 (825 aa).

A disordered region spans residues 26–65; that stretch reads RPGGGPAAGTVVAPGSPDRGRPRSRNSLASQDQQGAVTSG. Residues 33–42 are compositionally biased toward low complexity; the sequence is AGTVVAPGSP. The segment covering 51–65 has biased composition (polar residues); sequence NSLASQDQQGAVTSG. A KRAB domain is found at 103–174; sequence VTFGDVAVVF…KRKMRKGQHL (72 aa). C2H2-type zinc fingers lie at residues 377-399, 405-427, 433-456, 462-484, 490-512, 518-540, 546-568, 574-596, 602-624, 630-652, 658-680, 686-708, 714-736, and 742-764; these read FQCN…QRIH, YKCN…QRCH, YECP…RYYH, FDCI…RRIH, YTCE…QRIH, YECE…QRVH, FKCK…WRIH, FECG…QRIH, YECK…QKTH, YECK…QRVH, YKCL…RRLH, YECV…RRCH, YECS…QRIH, and YECK…KRVH. The segment at 770–792 adopts a C2H2-type 15; degenerate zinc-finger fold; sequence YNYKKGRRAFRQTAHFAHHQQIH.

It belongs to the krueppel C2H2-type zinc-finger protein family. Expressed predominantly in ovary.

Its subcellular location is the nucleus. Its function is as follows. May be involved in transcriptional regulation. May have a role in embryonic development. This chain is Zinc finger protein 28 (Zfp28), found in Mus musculus (Mouse).